A 155-amino-acid polypeptide reads, in one-letter code: uncharacterized protein (155 aa).

A compositionally biased stretch (polar residues) spans 1–14 (MLTLSGWITTQVPP). A disordered region spans residues 1 to 44 (MLTLSGWITTQVPPSSRAAADAKAARTGTAEQAEDPAAGTDAAD). Over residues 17-30 (RAAADAKAARTGTA) the composition is skewed to low complexity.

This is an uncharacterized protein from Pseudomonas aeruginosa (strain ATCC 15692 / DSM 22644 / CIP 104116 / JCM 14847 / LMG 12228 / 1C / PRS 101 / PAO1).